A 475-amino-acid polypeptide reads, in one-letter code: Secreted triacylglycerol lipase LIP5 (475 aa).

The signal sequence occupies residues 1 to 19; it reads MYPCTLLMVLLCLAIMTHG. Residues Cys129 and Cys300 are joined by a disulfide bond. Ser213 (nucleophile) is an active-site residue. N-linked (GlcNAc...) asparagine glycosylation is found at Asn246 and Asn312. Asp360 is a catalytic residue. N-linked (GlcNAc...) asparagine glycosylation occurs at Asn369. His394 is a catalytic residue. Asn471 is a glycosylation site (N-linked (GlcNAc...) asparagine).

The protein belongs to the AB hydrolase superfamily. Lipase family. Class Lip subfamily.

It carries out the reaction a triacylglycerol + H2O = a diacylglycerol + a fatty acid + H(+). The catalysed reaction is a monoacylglycerol + H2O = glycerol + a fatty acid + H(+). It catalyses the reaction a diacylglycerol + H2O = a monoacylglycerol + a fatty acid + H(+). Functionally, secreted lipase involved in Dandruff and seborrheic dermatitis (D/SD) probably via lipase-mediated breakdown of sebaceous lipids and release of irritating free fatty acids. Has triacylglycerol lipase activity and is able to hydrolyze triolein. Mostly converts monoolein to di- and triolein, while free fatty acids are only produced in low amounts. This Malassezia globosa (strain ATCC MYA-4612 / CBS 7966) (Dandruff-associated fungus) protein is Secreted triacylglycerol lipase LIP5.